Reading from the N-terminus, the 297-residue chain is MTEENIRQIAFYGKGGIGKSTTSQNTLAAMAEMGQRILIVGCDPKADSTRLMLHSKAQTTVLHLAAERGAVEDIEIEEVMLTGFRNVRCVESGGPEPGVGCAGRGIITAINFLEENGAYQDLDFVSYDVLGDVVCGGFAMPIREGKAQEIYIVTSGEMMAMYAANNIARGVLKYAHTGGVRLGGLICNSRNTDREIELIETLAKRLNTQMIHYVPRDNIVQHAELRRMTVNEYAPESNQANEYRILAQKIIDNKNLAIPTPIEMEELEELLIEFGILESDENTAMLVGKTATEAPVV.

Position 13-20 (13-20 (GKGGIGKS)) interacts with ATP. Cysteine 101 lines the [4Fe-4S] cluster pocket. At arginine 104 the chain carries ADP-ribosylarginine; by dinitrogenase reductase ADP-ribosyltransferase. Residue cysteine 135 coordinates [4Fe-4S] cluster.

The protein belongs to the NifH/BchL/ChlL family. In terms of assembly, homodimer. [4Fe-4S] cluster is required as a cofactor. The reversible ADP-ribosylation of Arg-104 inactivates the nitrogenase reductase and regulates nitrogenase activity.

The catalysed reaction is N2 + 8 reduced [2Fe-2S]-[ferredoxin] + 16 ATP + 16 H2O = H2 + 8 oxidized [2Fe-2S]-[ferredoxin] + 2 NH4(+) + 16 ADP + 16 phosphate + 6 H(+). The key enzymatic reactions in nitrogen fixation are catalyzed by the nitrogenase complex, which has 2 components: the iron protein and the molybdenum-iron protein. The chain is Nitrogenase iron protein (nifH) from Nostoc commune.